We begin with the raw amino-acid sequence, 92 residues long: Conotoxin Mr15.2 (92 aa).

The N-terminal stretch at 1–20 (MSTLKMMLLILLLLLPMATF) is a signal peptide. Positions 21-53 (DSDGQAIPGGGIPSAVNSRVGGDEKSGRSLEKR) are excised as a propeptide. The tract at residues 30–49 (GGIPSAVNSRVGGDEKSGRS) is disordered.

The protein belongs to the conotoxin N superfamily. Post-translationally, contains 4 disulfide bonds. Expressed by the venom duct.

Its subcellular location is the secreted. The chain is Conotoxin Mr15.2 from Conus marmoreus (Marble cone).